The following is a 61-amino-acid chain: U-stichotoxin-Hcr1a (61 aa).

A signal peptide spans 1-21 (MKPAIFLMLFVAMFLISEGEG). The propeptide occupies 22–31 (FKPKDAPQER). P36 bears the Hydroxyproline mark. Disulfide bonds link C41–C53 and C44–C59.

This sequence belongs to the Hau1a/HC18/HC19 family.

It localises to the secreted. Its subcellular location is the nematocyst. In terms of biological role, toxin that is lethal to crab. Does not produce the typical symptoms associated with sodium channel toxins in crabs, suggesting that it likely does not act on sodium channels. The polypeptide is U-stichotoxin-Hcr1a (Radianthus crispa (Leathery sea anemone)).